The sequence spans 162 residues: Regulatory protein RecX (162 aa).

This sequence belongs to the RecX family.

Its subcellular location is the cytoplasm. Its function is as follows. Modulates RecA activity. This Pectobacterium atrosepticum (strain SCRI 1043 / ATCC BAA-672) (Erwinia carotovora subsp. atroseptica) protein is Regulatory protein RecX.